The sequence spans 212 residues: MKLSKYIDHTLLKPQATEKDILKLIEEAKTYDFASVCVNPSWVKLAYENLKDTDVKVCTVVGFPLGATSIASKVYETKVAIEDGADEIDMVIAVGQLKSGNDEYVKEEIKKIVEASRDKLVKVIIETCLLTEEEKVKACTLSKEAGADYVKTSTGFSTGGAKPEDIKLMRETVGKDMGVKASGGIHTREEMEVMIENGATRIGASCGVELVK.

The active-site Proton donor/acceptor is Asp89. Lys151 acts as the Schiff-base intermediate with acetaldehyde in catalysis. The active-site Proton donor/acceptor is Lys180.

The protein belongs to the DeoC/FbaB aldolase family. DeoC type 1 subfamily.

It is found in the cytoplasm. The enzyme catalyses 2-deoxy-D-ribose 5-phosphate = D-glyceraldehyde 3-phosphate + acetaldehyde. It functions in the pathway carbohydrate degradation; 2-deoxy-D-ribose 1-phosphate degradation; D-glyceraldehyde 3-phosphate and acetaldehyde from 2-deoxy-alpha-D-ribose 1-phosphate: step 2/2. In terms of biological role, catalyzes a reversible aldol reaction between acetaldehyde and D-glyceraldehyde 3-phosphate to generate 2-deoxy-D-ribose 5-phosphate. The protein is Deoxyribose-phosphate aldolase of Clostridium botulinum (strain 657 / Type Ba4).